The chain runs to 374 residues: UPF0674 endoplasmic reticulum membrane protein C2G5.01 (374 aa).

The chain crosses the membrane as a helical span at residues 49–68 (FRLEFVILACFFLYVFSFIT). A glycan (N-linked (GlcNAc...) asparagine) is linked at Asn-287. The segment at 335–374 (KAAKKKVKSSGDISKLSESDQKKRMERERQRKMRRRAKKM) is disordered. The span at 349–363 (KLSESDQKKRMERER) shows a compositional bias: basic and acidic residues. Residues 364-374 (QRKMRRRAKKM) show a composition bias toward basic residues.

It belongs to the UPF0674 family.

Its subcellular location is the endoplasmic reticulum membrane. In Schizosaccharomyces pombe (strain 972 / ATCC 24843) (Fission yeast), this protein is UPF0674 endoplasmic reticulum membrane protein C2G5.01.